The chain runs to 402 residues: Phosphoglycerate kinase (402 aa).

Substrate is bound by residues 30–32 (DFN), Arg-46, 70–73 (HLGR), Arg-126, and Arg-159. ATP-binding positions include Lys-210, Glu-332, and 358-361 (GGDT).

The protein belongs to the phosphoglycerate kinase family. Monomer.

Its subcellular location is the cytoplasm. It carries out the reaction (2R)-3-phosphoglycerate + ATP = (2R)-3-phospho-glyceroyl phosphate + ADP. It participates in carbohydrate degradation; glycolysis; pyruvate from D-glyceraldehyde 3-phosphate: step 2/5. The polypeptide is Phosphoglycerate kinase (Helicobacter hepaticus (strain ATCC 51449 / 3B1)).